Consider the following 769-residue polypeptide: Ligand-dependent nuclear receptor-interacting factor 1 (769 aa).

Residues Lys259 and Lys279 each participate in a glycyl lysine isopeptide (Lys-Gly) (interchain with G-Cter in SUMO2) cross-link. Residues 378-387 (QIDQQNSVSP) show a composition bias toward polar residues. A disordered region spans residues 378-400 (QIDQQNSVSPDTPVRKDTLQTVS). Residues Ser402, Ser430, and Ser436 each carry the phosphoserine modification. Lys446 participates in a covalent cross-link: Glycyl lysine isopeptide (Lys-Gly) (interchain with G-Cter in SUMO2). Ser502 carries the post-translational modification Phosphoserine. Positions 528–562 (DQEPKIHNEMASTSDKGAQGRNDKKDSQGRSNKAL) are disordered. Positions 580-584 (LRVCL) match the PxVxL motif motif. Position 599 is a phosphoserine (Ser599). Residue Lys605 forms a Glycyl lysine isopeptide (Lys-Gly) (interchain with G-Cter in SUMO2) linkage. Short sequence motifs (nuclear localization signal) lie at residues 628–631 (KKRK) and 642–645 (KKRK). Lys702 is covalently cross-linked (Glycyl lysine isopeptide (Lys-Gly) (interchain with G-Cter in SUMO2)). At Thr732 the chain carries Phosphothreonine. Residues 740 to 769 (IRDEKIRRLKQVLREKEAALEEMRKKMHQK) are a coiled coil.

This sequence belongs to the LRIF1 family. As to quaternary structure, interacts with RARA. Interacts with SMCHD1; leading to recruitment to inactivated chromosome X in females. Interacts (via PxVxL motif) with HP1 (CBX1/HP1-beta, CBX3/HP1-gamma and CBX5/HP1-alpha). Widely expressed, with the highest expression levels in heart, liver and placenta.

The protein resides in the chromosome. The protein localises to the nucleus matrix. Together with SMCHD1, involved in chromosome X inactivation in females by promoting the compaction of heterochromatin. Also able to repress the ligand-induced transcriptional activity of retinoic acid receptor alpha (RARA), possibly through direct recruitment of histone deacetylases. Also required for silencing of the DUX4 locus in somatic cells. In Homo sapiens (Human), this protein is Ligand-dependent nuclear receptor-interacting factor 1.